We begin with the raw amino-acid sequence, 369 residues long: Serine proteinase inhibitor 1 (369 aa).

The protein belongs to the serpin family. Poxviruses subfamily.

Important in virulence. This chain is Serine proteinase inhibitor 1 (SPI-1), found in Oryctolagus cuniculus (Rabbit).